The primary structure comprises 70 residues: Gas vesicle protein A (70 aa).

This sequence belongs to the gas vesicle GvpA family. The gas vesicle shell is 2 nm thick and consists of a single layer of this protein. It forms helical ribs nearly perpendicular to the long axis of the vesicle.

Its subcellular location is the gas vesicle shell. In terms of biological role, gas vesicles are hollow, gas filled proteinaceous nanostructures found in some microorganisms. During planktonic growth they allow positioning of the organism at a favorable depth for light or nutrient acquisition. GvpA forms the protein shell. The sequence is that of Gas vesicle protein A from Ancylobacter aquaticus.